A 117-amino-acid chain; its full sequence is Large ribosomal subunit protein bL20c (117 aa).

It belongs to the bacterial ribosomal protein bL20 family.

The protein localises to the plastid. The protein resides in the chloroplast. In terms of biological role, binds directly to 23S ribosomal RNA and is necessary for the in vitro assembly process of the 50S ribosomal subunit. It is not involved in the protein synthesizing functions of that subunit. In Buxus microphylla (Littleleaf boxwood), this protein is Large ribosomal subunit protein bL20c.